Reading from the N-terminus, the 228-residue chain is MTGNQMFCRENELDESFKQLASYINIPVGVLLPFKSQCFVRHYNKGQIVYYSSDETTHIYLLLKGNIMRENFNLNGDVYRYLNREKVLFPLNNLFQDKVPNEMCTALTDCEMIGIPRDLIEYLCKNHEEIFVKLFSLLSETQCQHIEYNMALTSKLAKERVTKILRYLCQTVGYDHDEFYEIKHFMTIQLLSDMAGISRETTSHIINELKEEKILFKNSKNWLVSKDL.

22 to 141 (SYINIPVGVL…VKLFSLLSET (120 aa)) is an a nucleoside 3',5'-cyclic phosphate binding site. An HTH crp-type domain is found at 155 to 228 (KLAKERVTKI…SKNWLVSKDL (74 aa)). Positions 188–207 (IQLLSDMAGISRETTSHIIN) form a DNA-binding region, H-T-H motif.

The protein resides in the cytoplasm. Positively regulates the expression of the arcABDCR operon under anaerobic conditions, thus playing an essential role in arginine catabolism. May also control the expression of genes encoding proteins which are involved in anaerobic metabolism. Can bind cyclic AMP. The polypeptide is HTH-type transcriptional regulator ArcR (arcR) (Staphylococcus epidermidis (strain ATCC 35984 / DSM 28319 / BCRC 17069 / CCUG 31568 / BM 3577 / RP62A)).